An 813-amino-acid chain; its full sequence is Ribosome-releasing factor 2, mitochondrial (813 aa).

The N-terminal 20 residues, 1–20, are a transit peptide targeting the mitochondrion; sequence MLRIVWKPLKIRLPVWRRYQ. The tr-type G domain occupies 26–314; that stretch reads NSIRNVGIIA…AIIDYLPSPV (289 aa). Residues 35-42, 99-103, and 153-156 contribute to the GTP site; these read AHIDAGKT, DTPGH, and NKMD.

It belongs to the TRAFAC class translation factor GTPase superfamily. Classic translation factor GTPase family. EF-G/EF-2 subfamily.

The protein resides in the mitochondrion. Its function is as follows. Mitochondrial GTPase that mediates the disassembly of ribosomes from messenger RNA at the termination of mitochondrial protein biosynthesis. Not involved in the GTP-dependent ribosomal translocation step during translation elongation. The chain is Ribosome-releasing factor 2, mitochondrial (mef2) from Schizosaccharomyces pombe (strain 972 / ATCC 24843) (Fission yeast).